The following is a 1442-amino-acid chain: CD109 antigen (1442 aa).

Residues 1-21 (MRSRRLLSAAHLLCLCAVALA) form the signal peptide. N-linked (GlcNAc...) asparagine glycosylation is found at Asn67, Asn117, Asn246, Asn278, Asn370, and Asn421. A bait region (approximate) region spans residues 595–704 (DKSVTLMENS…TWIWLDAYMG (110 aa)). Positions 923 to 926 (CGEQ) form a cross-link, isoglutamyl cysteine thioester (Cys-Gln). A glycan (N-linked (GlcNAc...) asparagine) is linked at Asn1088. Ala1419 carries the GPI-anchor amidated alanine lipid modification. The propeptide at 1420-1442 (TDSLRRSSSLLVFCSVLLYFVQH) is removed in mature form.

Belongs to the protease inhibitor I39 (alpha-2-macroglobulin) family. In terms of assembly, heterodimer; disulfide-linked. Interacts with TGFB1 and TGFBR1. Forms a heteromeric complex with TGFBR1, TGFBR2 and TGFBR3 in a ligand-independent manner. Post-translationally, N-glycosylated. In terms of processing, 2 forms of 150 (p150) and 120 kDa (p120) exist due to proteolytic degradation from a 180 kDa form.

The protein resides in the cell membrane. Functionally, modulates negatively TGFB1 signaling in keratinocytes. The protein is CD109 antigen (Cd109) of Mus musculus (Mouse).